Consider the following 243-residue polypeptide: R-spondin-2 (243 aa).

Residues 1-21 (MQFQLFSFVLIILNCVDYSHC) form the signal peptide. Disulfide bonds link Cys40-Cys46, Cys43-Cys52, Cys55-Cys74, Cys78-Cys93, Cys96-Cys104, Cys101-Cys110, Cys113-Cys124, Cys128-Cys141, Cys145-Cys187, Cys156-Cys163, and Cys196-Cys203. An FU repeat occupies 90–134 (MNRCSRCRIENCDSCFSRDFCIKCKSGFYSHKGQCFEECPEGFAP). Positions 144–204 (GCEVGPWSEW…RCKMAMRHCP (61 aa)) constitute a TSP type-1 domain. The N-linked (GlcNAc...) asparagine glycan is linked to Asn160. Positions 202 to 243 (HCPGGTRTTKKKDKKNKKKKKKLLERAQEQHSVVLATDRSSQ) are disordered. Residues 209–224 (TTKKKDKKNKKKKKKL) are compositionally biased toward basic residues.

Belongs to the R-spondin family. As to quaternary structure, binds heparin.

The protein localises to the secreted. In terms of biological role, activator of the canonical Wnt signaling pathway by acting as a ligand for lgr4-6 receptors. Upon binding to lgr4-6 (lgr4, lgr5 or lgr6), lgr4-6 associate with phosphorylated lrp6 and frizzled receptors that are activated by extracellular Wnt receptors, triggering the canonical Wnt signaling pathway to increase expression of target genes. Acts both in the canonical. Wnt/beta-catenin-dependent pathway and in non-canonical Wnt signaling pathway. Activates neural markers and promotes muscle formation. Overexpression blocks activin, nodal and BMP4 signaling, suggesting that it may negatively regulate the TGF-beta pathway. During embryonic development, plays a crucial role in limb specification, amplifying the Wnt signaling pathway independently of LGR4-6 receptors, possibly by acting as a direct antagonistic ligand to RNF43 and ZNRF3, hence governing the number of limbs an embryo should form. In Xenopus tropicalis (Western clawed frog), this protein is R-spondin-2 (rspo2).